The sequence spans 108 residues: UPF0060 membrane protein RSKD131_0092 (108 aa).

Transmembrane regions (helical) follow at residues 5–25, 32–52, 62–82, and 86–106; these read LAAYAGAALAEIAGCFAVWAW, ALWLVPGALSLGAFAWLLALT, AVYGGIYVAASLLWLWAVEGV, and RWDMGGAALVLAGAAVILWAP.

Belongs to the UPF0060 family.

It is found in the cell inner membrane. This chain is UPF0060 membrane protein RSKD131_0092, found in Cereibacter sphaeroides (strain KD131 / KCTC 12085) (Rhodobacter sphaeroides).